A 729-amino-acid polypeptide reads, in one-letter code: Rho GTPase-activating protein 28 (729 aa).

Positions 1–78 (MEVEDSGGVV…ASVDSSASME (78 aa)) are disordered. Residues 37–49 (LSRKSIPRCRRIN) are compositionally biased toward basic residues. Over residues 63 to 76 (SRSNSQASVDSSAS) the composition is skewed to low complexity. A Phosphoserine modification is found at serine 70. A Phosphothreonine modification is found at threonine 164. The tract at residues 180–234 (FGVSESPPSDSCEHATQLDGTKEEKDLPGVTKTSRPLPDDASLSSTTLSNGAQDE) is disordered. Polar residues predominate over residues 221–231 (SLSSTTLSNGA). A Rho-GAP domain is found at 384–581 (VPLTVLLDND…LMLKYQKILW (198 aa)).

Its function is as follows. GTPase activator for the Rho-type GTPases by converting them to an inactive GDP-bound state. The polypeptide is Rho GTPase-activating protein 28 (Arhgap28) (Mus musculus (Mouse)).